The sequence spans 355 residues: Syntaxin-5 (355 aa).

The Cytoplasmic segment spans residues Met-1–Arg-333. Positions Pro-28 to Asp-37 are enriched in polar residues. Residues Pro-28–Pro-51 form a disordered region. The span at Pro-40 to Pro-51 shows a compositional bias: pro residues. Positions Ile-245–Met-247 match the IxM motif; signal for cargo packaging into COPII-coated vesicles motif. The t-SNARE coiled-coil homology domain maps to Asp-263–Tyr-325. A coiled-coil region spans residues Phe-287 to Ala-318. Residues Trp-334–Leu-354 traverse the membrane as a helical; Anchor for type IV membrane protein segment. Position 355 (Ala-355) is a topological domain, vesicular.

Belongs to the syntaxin family. In terms of assembly, part of a ternary complex containing STX5A, NSFL1C and VCP. Identified in a unique SNARE complex composed of the Golgi SNAREs GOSR1, GOSR2, YKT6 and VTI1A. Component of a SNARE complex consisting of STX5, YKT6, GOSR1 and BET1L. Interacts with BET1L. Interacts with BET1. Interacts with COG4. Interacts with GM130/GOLGA2. Interacts (via IxM motif) with SEC24C and SEC24D; mediates STX5 packaging into COPII-coated vesicles. Interacts with VLDLR; this interaction mediates VLDLR translocation from the endoplasmic reticulum to the plasma membrane.

Its subcellular location is the endoplasmic reticulum-Golgi intermediate compartment membrane. It localises to the golgi apparatus membrane. Functionally, mediates endoplasmic reticulum to Golgi transport. Together with p115/USO1 and GM130/GOLGA2, involved in vesicle tethering and fusion at the cis-Golgi membrane to maintain the stacked and inter-connected structure of the Golgi apparatus. Required for Golgi to endoplasmic reticulum retrogade transport, and for intra-Golgi transport. In terms of biological role, (Microbial infection) Required for the efficient production of infectious virion during human cytomegalovirus infection. Mechanistically, participates in the formation of the cytoplasmic viral assembly compartment where tegument acquisition and envelopment occur. This Homo sapiens (Human) protein is Syntaxin-5 (STX5).